The chain runs to 142 residues: Transcriptional regulator MraZ (142 aa).

SpoVT-AbrB domains are found at residues 5-47 (THSP…SERE) and 76-119 (ASDE…DAQA).

The protein belongs to the MraZ family. Forms oligomers.

The protein localises to the cytoplasm. It is found in the nucleoid. This chain is Transcriptional regulator MraZ, found in Arthrobacter sp. (strain FB24).